A 445-amino-acid polypeptide reads, in one-letter code: Arginine/agmatine antiporter (445 aa).

The Cytoplasmic segment spans residues 1-12 (MSSDADAHKVGL). A helical transmembrane segment spans residues 13–24 (IPVTLMVSGNIM). L-arginine contacts are provided by Ile23, Ser26, and Gly27. A Helix-breaking GSG motif TM1 motif is present at residues 25–27 (GSG). Over 25–42 (GSGVFLLPANLASTGGIA) the chain is Periplasmic. The helical transmembrane segment at 43 to 61 (IYGWLVTIIGALGLSMVYA) threads the bilayer. At 62–86 (KMSFLDPSPGGSYAYARRCFGPFLG) the chain is on the cytoplasmic side. Residues 87 to 112 (YQTNVLYWLACWIGNIAMVVIGVGYL) form a helical membrane-spanning segment. The L-arginine site is built by Ala96, Cys97, and Asn101. Residues 113-124 (SYFFPILKDPLV) lie on the Periplasmic side of the membrane. A helical membrane pass occupies residues 125 to 142 (LTITCVVVLWIFVLLNIV). Gly143 is a topological domain (cytoplasmic). The helical transmembrane segment at 144–171 (PKMITRVQAVATVLALIPIVGIAVFGWF) threads the bilayer. Residues 172–194 (WFRGETYMAAWNVSGLGTFGAIQ) are Periplasmic-facing. Residues 195 to 207 (STLNVTLWSFIGV) form a helical membrane-spanning segment. L-arginine is bound by residues Trp202 and Ile205. The Helix-breaking GVESA motif TM6 signature appears at 206–210 (GVESA). The Cytoplasmic segment spans residues 208–226 (ESASVAAGVVKNPKRNVPI). The helical transmembrane segment at 227–247 (ATIGGVLIAAVCYVLSTTAIM) threads the bilayer. The Periplasmic segment spans residues 248-277 (GMIPNAALRVSASPFGDAARMALGDTAGAI). Residues 278–301 (VSFCAAAGCLGSLGGWTLLAGQTA) form a helical membrane-spanning segment. Residue Trp293 coordinates L-arginine. The Cytoplasmic portion of the chain corresponds to 302–323 (KAAADDGLFPPIFARVNKAGTP). The helical transmembrane segment at 324 to 340 (VAGLIIVGILMTIFQLS) threads the bilayer. Residues 341-352 (SISPNATKEFGL) lie on the Periplasmic side of the membrane. A helical membrane pass occupies residues 353–370 (VSSVSVIFTLVPYLYTCA). Ser357 contacts L-arginine. The Cytoplasmic segment spans residues 371–388 (ALLLLGHGHFGKARPAYL). A helical membrane pass occupies residues 389-404 (AVTTIAFLYCIWAVVG). The Periplasmic segment spans residues 405 to 407 (SGA). The helical transmembrane segment at 408–426 (KEVMWSFVTLMVITAMYAL) threads the bilayer. Over 427 to 445 (NYNRLHKNPYPLDAPISKD) the chain is Cytoplasmic.

The protein belongs to the amino acid-polyamine-organocation (APC) superfamily. Basic amino acid/polyamine antiporter (APA) (TC 2.A.3.2) family. In terms of assembly, homodimer;each subunit has its own individual transport capacity.

The protein localises to the cell inner membrane. The enzyme catalyses agmatine(in) + L-arginine(out) = agmatine(out) + L-arginine(in). In terms of biological role, major component of the acid-resistance (AR) system allowing enteric pathogens to survive the acidic environment in the stomach. Exchanges extracellular arginine for its intracellular decarboxylation product agmatine (Agm) thereby expelling intracellular protons. Probably undergoes several conformational states in order to translocate the substrate across the membrane; keeps the substrate accessible to only 1 side of the membrane at a time by opening and closing 3 membrane-internal gates. The sequence is that of Arginine/agmatine antiporter (adiC) from Escherichia coli O157:H7.